We begin with the raw amino-acid sequence, 328 residues long: Flotillin-like protein FloA (328 aa).

The next 2 membrane-spanning stretches (helical) occupy residues 1 to 21 (MFGL…LVLF) and 26 to 46 (VGLW…TLVG).

The protein belongs to the flotillin-like FloA family. As to quaternary structure, homooligomerizes.

Its subcellular location is the cell membrane. It is found in the membrane raft. Functionally, found in functional membrane microdomains (FMM) that may be equivalent to eukaryotic membrane rafts. FMMs are highly dynamic and increase in number as cells age. Flotillins are thought to be important factors in membrane fluidity. The sequence is that of Flotillin-like protein FloA from Staphylococcus haemolyticus (strain JCSC1435).